We begin with the raw amino-acid sequence, 291 residues long: Syntaxin-1A homolog (291 aa).

The interval 1 to 24 is disordered; it reads MTKDRLSALKAAQSEDEQDDDMHM. Residues 1–266 lie on the Cytoplasmic side of the membrane; that stretch reads MTKDRLSALK…QYQSKARRKK (266 aa). Residues 69 to 95 are a coiled coil; it reads NDQKTKEELDELMAVIKRAANKVRGKL. One can recognise a t-SNARE coiled-coil homology domain in the interval 193-255; the sequence is LADIEARHND…DRAVADTKKA (63 aa). A helical; Anchor for type IV membrane protein transmembrane segment spans residues 267–287; that stretch reads ICILVTGVILITGLIIFILFY. Residues 288-291 lie on the Extracellular side of the membrane; the sequence is AKVL.

It belongs to the syntaxin family. As to quaternary structure, interacts (via N-terminus, in open or in closed conformation) with unc-18; the interaction is direct. Interaction in open conformation with unc-18 promotes synaptic vesicle docking and tethering. Interaction via N-terminus with unc-18 mediates the secretion of the neurotransmitter acetylcholine from cholinergic motor neurons. Interaction with unc-18 is reduced in the presence of unc-13. In terms of tissue distribution, expressed throughout the head ganglion, nerve ring, ventral cord, dorsal cord, intestine, vulva and spermatheca.

Its subcellular location is the cell membrane. It is found in the cell projection. The protein localises to the axon. It localises to the dendrite. The protein resides in the perikaryon. Its function is as follows. Plays a critical role in several secretory processes, including cuticle secretion and neurotransmitter release, and probably assists in neuronal membrane maturation or the final stages of neuronal differentiation. Plays a role in synaptic vesicle docking and tethering through its association with unc-18. Through binding to unc-18 mediates the release of the neurotransmitter acetylcholine from cholinergic motor neurons, and thereby promotes locomotory behaviors. Essential for embryonic viability and development. Has a role in dauer formation and adult life span. Required for locomotion. Probably by regulating neuronal transmission downstream of lin-3 and receptor lin-23 and phospholipase plc-3 and upstream of innexin unc-7 and egl-4/PKG in ALA neurons, involved in the decrease in pharyngeal pumping during the quiescent state that precedes each larval molt. This is Syntaxin-1A homolog from Caenorhabditis elegans.